The chain runs to 81 residues: Sulfur carrier protein TusA (81 aa).

Cys19 (cysteine persulfide intermediate) is an active-site residue.

Belongs to the sulfur carrier protein TusA family. Interacts with IscS.

The protein resides in the cytoplasm. It functions in the pathway tRNA modification. Its function is as follows. Sulfur carrier protein involved in sulfur trafficking in the cell. Part of a sulfur-relay system required for 2-thiolation during synthesis of 2-thiouridine of the modified wobble base 5-methylaminomethyl-2-thiouridine (mnm(5)s(2)U) in tRNA. Interacts with IscS and stimulates its cysteine desulfurase activity. Accepts an activated sulfur from IscS, which is then transferred to TusD, and thus determines the direction of sulfur flow from IscS to 2-thiouridine formation. Also appears to be involved in sulfur transfer for the biosynthesis of molybdopterin. The sequence is that of Sulfur carrier protein TusA from Pectobacterium atrosepticum (strain SCRI 1043 / ATCC BAA-672) (Erwinia carotovora subsp. atroseptica).